Consider the following 255-residue polypeptide: Propionicin-F (255 aa).

2 propeptides span residues 1 to 101 (MNTK…RVSC) and 145 to 255 (GTPT…DETV).

The protein resides in the secreted. Functionally, bacteriocin with specific antibacterial activity against strains of P.freudenreichii. No antibacterial activity was detected against P.acidipropionici, P.jensenii and P.thoenii. This chain is Propionicin-F, found in Propionibacterium freudenreichii subsp. freudenreichii.